The primary structure comprises 246 residues: Probable transcriptional regulatory protein KPK_1906 (246 aa).

The protein belongs to the TACO1 family.

The protein resides in the cytoplasm. This chain is Probable transcriptional regulatory protein KPK_1906, found in Klebsiella pneumoniae (strain 342).